The sequence spans 205 residues: Peroxynitrite isomerase (205 aa).

Residues 1–23 (MTEPDPAAAEQRPSVGRNLPTFQ) are disordered. The GXWXGXG signature appears at 52–58 (GVWRGEG). Heme b is bound by residues threonine 63, lysine 168, and histidine 195.

It belongs to the nitrobindin family. Homodimer. Heme b is required as a cofactor.

It catalyses the reaction peroxynitrite = nitrate. Its pathway is nitrogen metabolism. In terms of biological role, heme-binding protein able to scavenge peroxynitrite and to protect free L-tyrosine against peroxynitrite-mediated nitration, by acting as a peroxynitrite isomerase that converts peroxynitrite to nitrate. Therefore, this protein likely plays a role in peroxynitrite sensing and in the detoxification of reactive nitrogen and oxygen species (RNS and ROS, respectively). Is able to bind nitric oxide (NO) in vitro, but may act as a sensor of peroxynitrite levels in vivo. The sequence is that of Peroxynitrite isomerase from Mycobacteroides abscessus (strain ATCC 19977 / DSM 44196 / CCUG 20993 / CIP 104536 / JCM 13569 / NCTC 13031 / TMC 1543 / L948) (Mycobacterium abscessus).